Consider the following 229-residue polypeptide: Ribonuclease HII (229 aa).

The 188-residue stretch at 42–229 (TRIAGVDEVG…KPVHKILYQE (188 aa)) folds into the RNase H type-2 domain. A divalent metal cation contacts are provided by Asp48, Glu49, and Asp139.

It belongs to the RNase HII family. Mn(2+) serves as cofactor. It depends on Mg(2+) as a cofactor.

The protein localises to the cytoplasm. The enzyme catalyses Endonucleolytic cleavage to 5'-phosphomonoester.. Its function is as follows. Endonuclease that specifically degrades the RNA of RNA-DNA hybrids. The protein is Ribonuclease HII of Ruegeria sp. (strain TM1040) (Silicibacter sp.).